The primary structure comprises 562 residues: MAASGFLLIASFMVVLFVLSRPLGGFLARLIEGEPFSALQKVEAGLWRCSGVKNAEMNGWQYALAILCFNLLGIVLLFVLLMAQGSLPLNPEHLPGMSWHLALNTAVSFVTNTNWQAYSGENTLSYLSQMAGLTVQNFLSAATGIAVAFALIRAFARHSATTLGNAWVDLVRITLYVLLPIALIIALIFVSQGVLQNLDGYLHITTLEGVQQTLPMGPVASQEAIKVLGTNGGGFFGANSAHPFENPTAFSNFVQMLAIFLIPCALCFAFGQVVGDNRQGHALIWAMSLIFIVAVVVVMYAELAGNPHLSPLGADSNSNMEGKESRFGILATSLYAVVTTAASCGAVNAMHDSFTALGGMIPLWLMQIGEVVFGGVGSGLYGMLLFVLLTVFIAGLMIGRTPEYLGKKIDVFDMKMTALAILVTPTIVLLGTALALCTEAGRAGILNPGAHGFSEVLYALSSAANNNGSAFAGLSVNTPFYNLLLAAAMFIGRFGVILPVLAIASSLVAKKRQPAGNGTLPTGGPLFIGLLIGTVLLVGALTFIPALALGPVAEHLQVWLAH.

12 helical membrane-spanning segments follow: residues 6–26 (FLLI…LGGF), 63–83 (ALAI…LLMA), 132–152 (GLTV…FALI), 175–195 (LYVL…QGVL), 253–273 (FVQM…FGQV), 283–303 (LIWA…YAEL), 327–347 (FGIL…CGAV), 356–376 (ALGG…FGGV), 379–399 (GLYG…LMIG), 416–436 (MTAL…ALAL), 483–503 (LLLA…VLAI), and 526–546 (LFIG…FIPA).

It belongs to the KdpA family. In terms of assembly, the system is composed of three essential subunits: KdpA, KdpB and KdpC.

The protein localises to the cell inner membrane. In terms of biological role, part of the high-affinity ATP-driven potassium transport (or Kdp) system, which catalyzes the hydrolysis of ATP coupled with the electrogenic transport of potassium into the cytoplasm. This subunit binds the periplasmic potassium ions and delivers the ions to the membrane domain of KdpB through an intramembrane tunnel. In Yersinia pseudotuberculosis serotype O:1b (strain IP 31758), this protein is Potassium-transporting ATPase potassium-binding subunit.